Here is a 443-residue protein sequence, read N- to C-terminus: ATP-dependent protease ATPase subunit HslU (443 aa).

Residues Ile-19 and 61–66 each bind ATP; that span reads GVGKTE. The disordered stretch occupies residues 139–158; it reads PPRDIGFSQPEEKDSNTRQV. Residues Asp-256, Glu-321, and Arg-393 each coordinate ATP.

It belongs to the ClpX chaperone family. HslU subfamily. In terms of assembly, a double ring-shaped homohexamer of HslV is capped on each side by a ring-shaped HslU homohexamer. The assembly of the HslU/HslV complex is dependent on binding of ATP.

It localises to the cytoplasm. In terms of biological role, ATPase subunit of a proteasome-like degradation complex; this subunit has chaperone activity. The binding of ATP and its subsequent hydrolysis by HslU are essential for unfolding of protein substrates subsequently hydrolyzed by HslV. HslU recognizes the N-terminal part of its protein substrates and unfolds these before they are guided to HslV for hydrolysis. The protein is ATP-dependent protease ATPase subunit HslU of Cupriavidus taiwanensis (strain DSM 17343 / BCRC 17206 / CCUG 44338 / CIP 107171 / LMG 19424 / R1) (Ralstonia taiwanensis (strain LMG 19424)).